Consider the following 191-residue polypeptide: ATP synthase subunit delta (191 aa).

This sequence belongs to the ATPase delta chain family. In terms of assembly, F-type ATPases have 2 components, F(1) - the catalytic core - and F(0) - the membrane proton channel. F(1) has five subunits: alpha(3), beta(3), gamma(1), delta(1), epsilon(1). F(0) has three main subunits: a(1), b(2) and c(10-14). The alpha and beta chains form an alternating ring which encloses part of the gamma chain. F(1) is attached to F(0) by a central stalk formed by the gamma and epsilon chains, while a peripheral stalk is formed by the delta and b chains.

Its subcellular location is the cell inner membrane. In terms of biological role, f(1)F(0) ATP synthase produces ATP from ADP in the presence of a proton or sodium gradient. F-type ATPases consist of two structural domains, F(1) containing the extramembraneous catalytic core and F(0) containing the membrane proton channel, linked together by a central stalk and a peripheral stalk. During catalysis, ATP synthesis in the catalytic domain of F(1) is coupled via a rotary mechanism of the central stalk subunits to proton translocation. Its function is as follows. This protein is part of the stalk that links CF(0) to CF(1). It either transmits conformational changes from CF(0) to CF(1) or is implicated in proton conduction. The chain is ATP synthase subunit delta from Halothermothrix orenii (strain H 168 / OCM 544 / DSM 9562).